Consider the following 141-residue polypeptide: Hemoglobin subunit alpha-A (141 aa).

In terms of domain architecture, Globin spans 1-141; sequence VLSAADKTNV…VGTVLTAKYR (141 aa). His-58 contacts O2. Residue His-87 coordinates heme b.

Belongs to the globin family. In terms of assembly, heterotetramer of two alpha chains and two beta chains. Red blood cells.

In terms of biological role, involved in oxygen transport from the lung to the various peripheral tissues. This Branta canadensis (Canada goose) protein is Hemoglobin subunit alpha-A (HBAA).